Reading from the N-terminus, the 123-residue chain is Ribosome-binding factor A (123 aa).

Belongs to the RbfA family. As to quaternary structure, monomer. Binds 30S ribosomal subunits, but not 50S ribosomal subunits or 70S ribosomes.

It is found in the cytoplasm. Functionally, one of several proteins that assist in the late maturation steps of the functional core of the 30S ribosomal subunit. Associates with free 30S ribosomal subunits (but not with 30S subunits that are part of 70S ribosomes or polysomes). Required for efficient processing of 16S rRNA. May interact with the 5'-terminal helix region of 16S rRNA. In Prochlorococcus marinus (strain NATL1A), this protein is Ribosome-binding factor A.